We begin with the raw amino-acid sequence, 155 residues long: Aspartate carbamoyltransferase regulatory chain (155 aa).

Residues Cys113, Cys118, Cys141, and Cys144 each coordinate Zn(2+).

The protein belongs to the PyrI family. As to quaternary structure, contains catalytic and regulatory chains. It depends on Zn(2+) as a cofactor.

In terms of biological role, involved in allosteric regulation of aspartate carbamoyltransferase. This chain is Aspartate carbamoyltransferase regulatory chain, found in Methanococcus aeolicus (strain ATCC BAA-1280 / DSM 17508 / OCM 812 / Nankai-3).